We begin with the raw amino-acid sequence, 172 residues long: Ribosome maturation factor RimM (172 aa).

One can recognise a PRC barrel domain in the interval 96-168 (EGEFYYHQII…RVDVELMEGL (73 aa)).

This sequence belongs to the RimM family. In terms of assembly, binds ribosomal protein uS19.

The protein resides in the cytoplasm. Its function is as follows. An accessory protein needed during the final step in the assembly of 30S ribosomal subunit, possibly for assembly of the head region. Essential for efficient processing of 16S rRNA. May be needed both before and after RbfA during the maturation of 16S rRNA. It has affinity for free ribosomal 30S subunits but not for 70S ribosomes. The protein is Ribosome maturation factor RimM of Streptococcus pyogenes serotype M3 (strain ATCC BAA-595 / MGAS315).